A 293-amino-acid chain; its full sequence is ATP synthase gamma chain (293 aa).

The protein belongs to the ATPase gamma chain family. In terms of assembly, F-type ATPases have 2 components, CF(1) - the catalytic core - and CF(0) - the membrane proton channel. CF(1) has five subunits: alpha(3), beta(3), gamma(1), delta(1), epsilon(1). CF(0) has three main subunits: a, b and c.

The protein localises to the cell membrane. Produces ATP from ADP in the presence of a proton gradient across the membrane. The gamma chain is believed to be important in regulating ATPase activity and the flow of protons through the CF(0) complex. The protein is ATP synthase gamma chain of Methylacidiphilum infernorum (isolate V4) (Methylokorus infernorum (strain V4)).